The following is a 1418-amino-acid chain: JmjC domain-containing histone demethylation protein 1 (1418 aa).

Disordered stretches follow at residues 1 to 86, 102 to 162, and 308 to 329; these read MIGA…SSST, APLS…STFD, and GADRASLDVPPRGDDDTESDEN. A compositionally biased stretch (basic and acidic residues) spans 44 to 60; that stretch reads WIDRGDSQAASYDRDRV. Positions 61 to 71 are enriched in polar residues; that stretch reads TSNNDVYSSTN. Over residues 127–139 the composition is skewed to basic and acidic residues; it reads STERPAKRPRSEK. The segment covering 143-162 has biased composition (polar residues); it reads PLHQPQTTVAPDANPSSTFD. Residues 308–321 show a composition bias toward basic and acidic residues; it reads GADRASLDVPPRGD. The segment at 331–391 adopts a PHD-type zinc-finger fold; the sequence is QANCAACNLV…KFICRRCRPI (61 aa). The region spanning 588–746 is the JmjC domain; the sequence is VSQSKLGKLI…MQIKVAKIEK (159 aa). Residue Thr639 participates in substrate binding. His642 and Asp644 together coordinate Fe cation. Lys659 contributes to the substrate binding site. Residue His714 coordinates Fe cation. Disordered regions lie at residues 891-964, 1090-1118, 1130-1195, and 1250-1394; these read PQWT…TVEI, NAATSKVHDGSPEGLNTGKKGRSKACDDC, YGRI…HTQR, and KPTA…DEPD. Basic and acidic residues predominate over residues 907–925; it reads LTEKKPAGRPSRRSERNAE. Composition is skewed to basic and acidic residues over residues 1130-1143 and 1186-1195; these read YGRIDPIKAQERSK and AEGDMSHTQR. Positions 1250-1263 are enriched in polar residues; sequence KPTASLVSPPTSQA. Residues 1341-1352 are compositionally biased toward low complexity; the sequence is SSKKPASRPSSS.

The protein belongs to the JHDM1 histone demethylase family. Fe(2+) is required as a cofactor.

The protein resides in the nucleus. The catalysed reaction is N(6),N(6)-dimethyl-L-lysyl(36)-[histone H3] + 2 2-oxoglutarate + 2 O2 = L-lysyl(36)-[histone H3] + 2 formaldehyde + 2 succinate + 2 CO2. Its function is as follows. Histone demethylase that specifically demethylates 'Lys-36' of histone H3, thereby playing a central role in histone code. This chain is JmjC domain-containing histone demethylation protein 1 (jhd1), found in Aspergillus fumigatus (strain ATCC MYA-4609 / CBS 101355 / FGSC A1100 / Af293) (Neosartorya fumigata).